Reading from the N-terminus, the 424-residue chain is 3-isopropylmalate dehydratase large subunit (424 aa).

[4Fe-4S] cluster contacts are provided by C299, C359, and C362.

Belongs to the aconitase/IPM isomerase family. LeuC type 2 subfamily. Heterodimer of LeuC and LeuD. It depends on [4Fe-4S] cluster as a cofactor.

The catalysed reaction is (2R,3S)-3-isopropylmalate = (2S)-2-isopropylmalate. It participates in amino-acid biosynthesis; L-leucine biosynthesis; L-leucine from 3-methyl-2-oxobutanoate: step 2/4. Its function is as follows. Catalyzes the isomerization between 2-isopropylmalate and 3-isopropylmalate, via the formation of 2-isopropylmaleate. The sequence is that of 3-isopropylmalate dehydratase large subunit from Hydrogenobaculum sp. (strain Y04AAS1).